Reading from the N-terminus, the 92-residue chain is Small ribosomal subunit protein bS20 (92 aa).

The protein belongs to the bacterial ribosomal protein bS20 family.

Its function is as follows. Binds directly to 16S ribosomal RNA. This chain is Small ribosomal subunit protein bS20, found in Magnetococcus marinus (strain ATCC BAA-1437 / JCM 17883 / MC-1).